A 335-amino-acid chain; its full sequence is Ferrochelatase (335 aa).

Residues His-192 and Glu-291 each coordinate Fe cation.

It belongs to the ferrochelatase family.

Its subcellular location is the cytoplasm. It catalyses the reaction heme b + 2 H(+) = protoporphyrin IX + Fe(2+). Its pathway is porphyrin-containing compound metabolism; protoheme biosynthesis; protoheme from protoporphyrin-IX: step 1/1. Its function is as follows. Catalyzes the ferrous insertion into protoporphyrin IX. This chain is Ferrochelatase, found in Bdellovibrio bacteriovorus (strain ATCC 15356 / DSM 50701 / NCIMB 9529 / HD100).